The sequence spans 325 residues: Phenylalanine--tRNA ligase alpha subunit (325 aa).

Glutamate 251 serves as a coordination point for Mg(2+).

This sequence belongs to the class-II aminoacyl-tRNA synthetase family. Phe-tRNA synthetase alpha subunit type 1 subfamily. Tetramer of two alpha and two beta subunits. Mg(2+) is required as a cofactor.

Its subcellular location is the cytoplasm. The catalysed reaction is tRNA(Phe) + L-phenylalanine + ATP = L-phenylalanyl-tRNA(Phe) + AMP + diphosphate + H(+). This is Phenylalanine--tRNA ligase alpha subunit from Thermotoga petrophila (strain ATCC BAA-488 / DSM 13995 / JCM 10881 / RKU-1).